Here is a 161-residue protein sequence, read N- to C-terminus: M-phase phosphoprotein 6 (161 aa).

Glycyl lysine isopeptide (Lys-Gly) (interchain with G-Cter in SUMO2) cross-links involve residues K37 and K86. The residue at position 111 (S111) is a Phosphoserine. Positions 117–134 (RRYETLVGTIGKKFVKKR) match the Nuclear localization signal motif. Residues K128, K151, and K154 each participate in a glycyl lysine isopeptide (Lys-Gly) (interchain with G-Cter in SUMO2) cross-link.

This sequence belongs to the MPP6 family. As to quaternary structure, associates with the RNA exosome complex, mediated by EXOSC3. Interacts with ARHGAP18. Interacts with exosome cofactors EXOSC10 and MTREX. Post-translationally, phosphorylated in M (mitotic) phase.

The protein resides in the nucleus. The protein localises to the nucleolus. It is found in the cytoplasm. Its function is as follows. RNA-binding protein that associates with the RNA exosome complex. Involved in the 3'-processing of the 7S pre-RNA to the mature 5.8S rRNA and plays a role in recruiting the RNA exosome complex to pre-rRNA; this function may include C1D. This Mus musculus (Mouse) protein is M-phase phosphoprotein 6.